The sequence spans 181 residues: MAKFLDSIAGFGVTFGSMFKKTVTEEYPEKPGPVAPRYHGRHQLNRYPDGLEKCIGCELCAWACPADAIYVEGADNTDEQRFSPGERYGRVYQINYLRCIGCGLCIEACPTRALTMTNDYELADDNRADLIYEKDRLLAPLQPEMTAPPHPRAAGATDKDYYLGNVTAEGLRETQKTGESR.

4Fe-4S ferredoxin-type domains follow at residues 44–74 and 90–119; these read LNRY…VEGA and RVYQ…MTND. [4Fe-4S] cluster is bound by residues Cys54, Cys57, Cys60, Cys64, Cys99, Cys102, Cys105, and Cys109.

The protein belongs to the complex I 23 kDa subunit family. As to quaternary structure, NDH-1 is composed of 14 different subunits. Subunits NuoA, H, J, K, L, M, N constitute the membrane sector of the complex. The cofactor is [4Fe-4S] cluster.

It localises to the cell membrane. The catalysed reaction is a quinone + NADH + 5 H(+)(in) = a quinol + NAD(+) + 4 H(+)(out). In terms of biological role, NDH-1 shuttles electrons from NADH, via FMN and iron-sulfur (Fe-S) centers, to quinones in the respiratory chain. The immediate electron acceptor for the enzyme in this species is believed to be menaquinone. Couples the redox reaction to proton translocation (for every two electrons transferred, four hydrogen ions are translocated across the cytoplasmic membrane), and thus conserves the redox energy in a proton gradient. This Mycobacterium marinum (strain ATCC BAA-535 / M) protein is NADH-quinone oxidoreductase subunit I.